The following is a 634-amino-acid chain: MYHKTQHHRYIPGLDGLRAFAVLSVITYHLNFNWANGGFIGVDIFFVLSGYLITSILLPAYGNDINLDFRDFWVRRIRRLLPAAYLMIFSTVVWVVLFDRELLHTVRGDAISSLFYMSNWWFIFHKLSYFDSFGSPSPLKNLWSLAIEEQFYIIWPMFLVVGMYIMKSRARLAAVISLLVLCSAVMMSVLYEPGGDPSRVYYGTDTRSFELLIGCALALVWPMKRLSSNRLPSKLKHTLHATEFLAFCILVLCVYFTDEYEPFLYRGGMLFISVTAAILIACVCHPSSFLGNLLSWRPLRWLGTRSYGIYLWHYPVIVLSTPVQEIGNPVFWHIVLKVIVTCILAELSYHFIEKPIRTQGFRSFSRRVFIHRIKEWKTTSVISKMSIGFIIFAILIFAGGLSGLAGEQKHPTKWTYSSQETNADTSQASGDKKNAAADKKHNPEQKTTDSNQGQKENKDSGQETHKKKDTQSQQLKKPADTAKEVLAIGDSVMLDISSHLRQSFSNVTIDGKVGRQMSQALELAREYKSFNQPNKAVIIELGTNGYFTNSQIEQLLQSFSKAHIYLVNTRVPRQWESKVNESLQQQAHAHQNVTLVDWHTEALQHPEYFTPDGVHLVPKGAKTLTALIVQAMKS.

11 helical membrane passes run Tyr10–Leu30, Gly38–Leu58, Arg79–Asp99, Ala110–Phe130, Leu145–Ile165, Leu172–Glu192, Phe244–Leu264, Leu270–Leu290, Tyr307–Gly327, Pro329–Tyr349, and Met385–Ala405. A disordered region spans residues Lys413–Thr481. The span at Trp414 to Ser429 shows a compositional bias: polar residues. 2 stretches are compositionally biased toward basic and acidic residues: residues Gly430–Thr447 and Lys455–Thr470.

The protein belongs to the acyltransferase 3 family.

The protein localises to the cell membrane. This Bacillus subtilis (strain 168) protein is Putative peptidoglycan O-acetyltransferase YrhL (yrhL).